The chain runs to 228 residues: Small ribosomal subunit protein uS3 (228 aa).

The region spanning 39–107 (IRKELNEKLK…PVNINIEEIK (69 aa)) is the KH type-2 domain.

The protein belongs to the universal ribosomal protein uS3 family. Part of the 30S ribosomal subunit. Forms a tight complex with proteins S10 and S14.

In terms of biological role, binds the lower part of the 30S subunit head. Binds mRNA in the 70S ribosome, positioning it for translation. The chain is Small ribosomal subunit protein uS3 from Hydrogenovibrio crunogenus (strain DSM 25203 / XCL-2) (Thiomicrospira crunogena).